A 521-amino-acid chain; its full sequence is Serine/threonine-protein kinase A (521 aa).

Positions 15–289 constitute a Protein kinase domain; sequence YQLVELVGSG…DVIIRAIDAI (275 aa). Residues 21–29 and K45 each bind ATP; that span reads VGSGAMGQV. D148 (proton acceptor) is an active-site residue.

This sequence belongs to the protein kinase superfamily. Ser/Thr protein kinase family. Autophosphorylated.

It catalyses the reaction L-seryl-[protein] + ATP = O-phospho-L-seryl-[protein] + ADP + H(+). It carries out the reaction L-threonyl-[protein] + ATP = O-phospho-L-threonyl-[protein] + ADP + H(+). In terms of biological role, protein kinase that regulates cellular motility via phosphorylation of membrane proteins. This chain is Serine/threonine-protein kinase A (spkA), found in Synechocystis sp. (strain ATCC 27184 / PCC 6803 / Kazusa).